The following is a 581-amino-acid chain: MGMKFQKILVLAGIVIGFLSIIVVLAGTLLKNSVPNVLAPVERHFAFDYVIVGGGTGGSTLTSLLAKNSNGSVLLIEAGGQFGLLSRIPLLTTFQQKGINDWSFLSVPQKHSSRGLIERRQCLPRGKGLGGSANLNYMLHFDGHGPDFDSWRDHHNLSDWSWAQMRSFMAAAKPKNPDMLEIPRRYSKLTEALEEAQAQFAYKDWIFRRSLYNIRNGLRHSVVQQFLNPVIHHSNLRLLPDALVKRIQLAPSPFLQATSILVGIKDEENREKEFSIELLMASGIGDVSALKKLGIPAQHSLPLVGHNLHDHFNLPLFVSMGVTGPTLNQNTLLNPMTLINYLSSGSGPLGNFGVLGNVVSYGGLGAPPYGITFFGAGAIDESALMSISNFKGPAFRALFPRYYNSSQEGFVVISSCLQPKSRGSVGLLNRHMRRNPLIDPNYLSSEEDVACTISAIRSAVELVNSTAFAALHPRIHWPRVQECSNFGPFERDFFDNRPSDQYLECLMRHVGLGSHHPGGTCALGSVVDSQLRLKGVSNVRVVDASVLPRPISGNPNSVVVAIALRAASWILKSELQAGDSK.

The first 26 residues, 1–26 (MGMKFQKILVLAGIVIGFLSIIVVLA), serve as a signal peptide directing secretion. FAD is bound at residue 48–77 (DYVIVGGGTGGSTLTSLLAKNSNGSVLLIE). Residues asparagine 70, asparagine 156, asparagine 404, and asparagine 464 are each glycosylated (N-linked (GlcNAc...) asparagine). The active-site Proton acceptor is the histidine 516.

It belongs to the GMC oxidoreductase family. Requires FAD as cofactor.

The protein resides in the secreted. Functionally, oxidoreductase involved in biosynthesis of 3-hydroxyretinal, a chromophore for rhodopsin Rh1. Not responsible for the initial hydroxylation of the retinal ring but rather acts in a subsequent step in chromophore production. May catalyze the conversion of (3R)-3-hydroxyretinol to the 3S enantiomer. The protein is Neither inactivation nor afterpotential protein G (ninaG) of Drosophila melanogaster (Fruit fly).